The primary structure comprises 598 residues: ATP-dependent lipid A-core flippase (598 aa).

The span at 1–15 (MSQAYQPDSTKTSAK) shows a compositional bias: polar residues. A disordered region spans residues 1–21 (MSQAYQPDSTKTSAKTPVAPT). The next 4 helical transmembrane spans lie at 44-64 (WWAI…EIWI), 85-105 (LFPF…FLGN), 172-192 (VVAL…ILFV), and 269-289 (INTP…VWLA). The ABC transmembrane type-1 domain maps to 48–329 (LLTIIGFAIN…LTDVNQQLQR (282 aa)). Residues 360 to 595 (IKLDNVSLVY…HGHYAQMYAR (236 aa)) enclose the ABC transporter domain. 393 to 400 (GRSGAGKS) contacts ATP.

The protein belongs to the ABC transporter superfamily. Lipid exporter (TC 3.A.1.106) family. Homodimer.

The protein localises to the cell inner membrane. The enzyme catalyses ATP + H2O + lipid A-core oligosaccharideSide 1 = ADP + phosphate + lipid A-core oligosaccharideSide 2.. Its function is as follows. Involved in lipopolysaccharide (LPS) biosynthesis. Translocates lipid A-core from the inner to the outer leaflet of the inner membrane. Transmembrane domains (TMD) form a pore in the inner membrane and the ATP-binding domain (NBD) is responsible for energy generation. In Psychrobacter cryohalolentis (strain ATCC BAA-1226 / DSM 17306 / VKM B-2378 / K5), this protein is ATP-dependent lipid A-core flippase.